The sequence spans 169 residues: Putative tRNA (cytidine(34)-2'-O)-methyltransferase (169 aa).

S-adenosyl-L-methionine-binding residues include valine 79, glycine 104, isoleucine 125, and serine 134.

It belongs to the class IV-like SAM-binding methyltransferase superfamily. RNA methyltransferase TrmH family. TrmL subfamily.

It is found in the cytoplasm. It carries out the reaction cytidine(34) in tRNA + S-adenosyl-L-methionine = 2'-O-methylcytidine(34) in tRNA + S-adenosyl-L-homocysteine + H(+). The catalysed reaction is 5-carboxymethylaminomethyluridine(34) in tRNA(Leu) + S-adenosyl-L-methionine = 5-carboxymethylaminomethyl-2'-O-methyluridine(34) in tRNA(Leu) + S-adenosyl-L-homocysteine + H(+). Functionally, could methylate the ribose at the nucleotide 34 wobble position in tRNA. In Lactococcus lactis subsp. cremoris (strain MG1363), this protein is Putative tRNA (cytidine(34)-2'-O)-methyltransferase.